Here is a 215-residue protein sequence, read N- to C-terminus: Large ribosomal subunit protein uL4 (215 aa).

Positions 46–72 are disordered; sequence TAKSKNRAEVSGGGRKPWAQKGGGRAR. Positions 56–71 are enriched in gly residues; the sequence is SGGGRKPWAQKGGGRA.

The protein belongs to the universal ribosomal protein uL4 family. Part of the 50S ribosomal subunit.

One of the primary rRNA binding proteins, this protein initially binds near the 5'-end of the 23S rRNA. It is important during the early stages of 50S assembly. It makes multiple contacts with different domains of the 23S rRNA in the assembled 50S subunit and ribosome. Functionally, forms part of the polypeptide exit tunnel. The protein is Large ribosomal subunit protein uL4 of Helicobacter pylori (strain G27).